Reading from the N-terminus, the 147-residue chain is uncharacterized protein (147 aa).

The HTH marR-type domain maps to 11-147 (NTSPGFLLWQ…SGLQELLKHE (137 aa)). Positions 61–84 (QKKLASFSQTNIMMVSEVVRTLEK) form a DNA-binding region, H-T-H motif.

This is an uncharacterized protein from Bacillus subtilis (strain 168).